The primary structure comprises 81 residues: Acyl carrier protein (81 aa).

Positions Ser-4–Val-79 constitute a Carrier domain. O-(pantetheine 4'-phosphoryl)serine is present on Ser-39.

This sequence belongs to the acyl carrier protein (ACP) family. 4'-phosphopantetheine is transferred from CoA to a specific serine of apo-ACP by AcpS. This modification is essential for activity because fatty acids are bound in thioester linkage to the sulfhydryl of the prosthetic group.

It is found in the cytoplasm. It participates in lipid metabolism; fatty acid biosynthesis. Functionally, carrier of the growing fatty acid chain in fatty acid biosynthesis. The polypeptide is Acyl carrier protein (Thermosynechococcus vestitus (strain NIES-2133 / IAM M-273 / BP-1)).